The following is a 249-amino-acid chain: MILFPAIDLKDGQCVRLKLGDMNQATVYNPDPGAQAKAFEDQGFEWLHVVDLNGAFAGETVNGAAVDAILKATKNPVQLGGGIRTLDHIENWLARGLTRVILGTVAVRDPALVIEACKRFPGHVAVGIDAKGGKVAVEGWAEASELGIIELAKKFEGAGVAAIIYTDIDRDGILTGINWASTLELADAVSIPVIASGGLASMDDIRRMVEPDARKLEGAISGRALYDGRIDPQEALALIKAAKAKEIAQ.

The active-site Proton acceptor is the Asp8. Asp129 acts as the Proton donor in catalysis.

It belongs to the HisA/HisF family.

It localises to the cytoplasm. The catalysed reaction is 1-(5-phospho-beta-D-ribosyl)-5-[(5-phospho-beta-D-ribosylamino)methylideneamino]imidazole-4-carboxamide = 5-[(5-phospho-1-deoxy-D-ribulos-1-ylimino)methylamino]-1-(5-phospho-beta-D-ribosyl)imidazole-4-carboxamide. The protein operates within amino-acid biosynthesis; L-histidine biosynthesis; L-histidine from 5-phospho-alpha-D-ribose 1-diphosphate: step 4/9. The protein is 1-(5-phosphoribosyl)-5-[(5-phosphoribosylamino)methylideneamino] imidazole-4-carboxamide isomerase of Rhizobium rhizogenes (strain K84 / ATCC BAA-868) (Agrobacterium radiobacter).